Consider the following 332-residue polypeptide: tRNA U34 carboxymethyltransferase (332 aa).

Carboxy-S-adenosyl-L-methionine is bound by residues lysine 96, tryptophan 110, lysine 115, glycine 135, 186 to 187 (LE), methionine 204, tyrosine 208, and arginine 323.

Belongs to the class I-like SAM-binding methyltransferase superfamily. CmoB family. In terms of assembly, homotetramer.

It catalyses the reaction carboxy-S-adenosyl-L-methionine + 5-hydroxyuridine(34) in tRNA = 5-carboxymethoxyuridine(34) in tRNA + S-adenosyl-L-homocysteine + H(+). In terms of biological role, catalyzes carboxymethyl transfer from carboxy-S-adenosyl-L-methionine (Cx-SAM) to 5-hydroxyuridine (ho5U) to form 5-carboxymethoxyuridine (cmo5U) at position 34 in tRNAs. In Hydrogenovibrio crunogenus (strain DSM 25203 / XCL-2) (Thiomicrospira crunogena), this protein is tRNA U34 carboxymethyltransferase.